We begin with the raw amino-acid sequence, 473 residues long: UDP-N-acetylmuramate--L-alanine ligase (473 aa).

112 to 118 lines the ATP pocket; that stretch reads GTHGKTT.

This sequence belongs to the MurCDEF family.

It localises to the cytoplasm. It catalyses the reaction UDP-N-acetyl-alpha-D-muramate + L-alanine + ATP = UDP-N-acetyl-alpha-D-muramoyl-L-alanine + ADP + phosphate + H(+). It participates in cell wall biogenesis; peptidoglycan biosynthesis. Its function is as follows. Cell wall formation. In Nitrosomonas europaea (strain ATCC 19718 / CIP 103999 / KCTC 2705 / NBRC 14298), this protein is UDP-N-acetylmuramate--L-alanine ligase.